Reading from the N-terminus, the 309-residue chain is tRNA pseudouridine synthase B (309 aa).

Residue Asp51 is the Nucleophile of the active site.

The protein belongs to the pseudouridine synthase TruB family. Type 1 subfamily.

It carries out the reaction uridine(55) in tRNA = pseudouridine(55) in tRNA. Its function is as follows. Responsible for synthesis of pseudouridine from uracil-55 in the psi GC loop of transfer RNAs. This Coxiella burnetii (strain RSA 331 / Henzerling II) protein is tRNA pseudouridine synthase B.